A 393-amino-acid polypeptide reads, in one-letter code: Chorismate synthase (393 aa).

Residues Arg-40 and Arg-46 each coordinate NADP(+). FMN contacts are provided by residues 129–131 (RSS), 249–250 (QA), Gly-301, 316–320 (KPIPT), and Arg-342.

Belongs to the chorismate synthase family. As to quaternary structure, homotetramer. The cofactor is FMNH2.

The enzyme catalyses 5-O-(1-carboxyvinyl)-3-phosphoshikimate = chorismate + phosphate. It participates in metabolic intermediate biosynthesis; chorismate biosynthesis; chorismate from D-erythrose 4-phosphate and phosphoenolpyruvate: step 7/7. In terms of biological role, catalyzes the anti-1,4-elimination of the C-3 phosphate and the C-6 proR hydrogen from 5-enolpyruvylshikimate-3-phosphate (EPSP) to yield chorismate, which is the branch point compound that serves as the starting substrate for the three terminal pathways of aromatic amino acid biosynthesis. This reaction introduces a second double bond into the aromatic ring system. The protein is Chorismate synthase of Geotalea daltonii (strain DSM 22248 / JCM 15807 / FRC-32) (Geobacter daltonii).